A 208-amino-acid polypeptide reads, in one-letter code: Translation initiation factor IF-3 (208 aa).

This sequence belongs to the IF-3 family. As to quaternary structure, monomer.

It localises to the cytoplasm. Its function is as follows. IF-3 binds to the 30S ribosomal subunit and shifts the equilibrium between 70S ribosomes and their 50S and 30S subunits in favor of the free subunits, thus enhancing the availability of 30S subunits on which protein synthesis initiation begins. This Parabacteroides distasonis (strain ATCC 8503 / DSM 20701 / CIP 104284 / JCM 5825 / NCTC 11152) protein is Translation initiation factor IF-3.